A 321-amino-acid chain; its full sequence is MKGINVCRSIAGVIGTASLTTLVWGNCPSGLLALNAITQADAPTAVSENNSSLAPLESSVTATSSTPAPAFQDTELISLVPHQGPENRLAVTLRVNQIPVVTFLGTATELAALSNDQVTDTMERAQTVARRLDELSGAEFFDPSTIKVGLDATTRQLVVKSEDEILLTINKNTVLPEKKLSAPETALQTANRLRRLLGGAEPIVALPAALQVARVNTFDAAATIKRIKGGIASWYGPGFHGRRTANGERFNQNALTAAHRTLPFGTRVKVTNLRNGQSVVVRINDRGPFTGGRVIDLSAGAARAIGIHSSGVGNVALDIVQ.

It belongs to the RlpA family.

Its function is as follows. Lytic transglycosylase with a strong preference for naked glycan strands that lack stem peptides. The polypeptide is Probable endolytic peptidoglycan transglycosylase RlpA (Synechocystis sp. (strain ATCC 27184 / PCC 6803 / Kazusa)).